Here is a 450-residue protein sequence, read N- to C-terminus: 3-phosphoshikimate 1-carboxyvinyltransferase (450 aa).

Lys-28, Ser-29, and Arg-33 together coordinate 3-phosphoshikimate. Residue Lys-28 participates in phosphoenolpyruvate binding. Phosphoenolpyruvate contacts are provided by Gly-100 and Arg-128. 3-phosphoshikimate is bound by residues Ser-173, Gln-175, Asp-326, and Lys-353. Gln-175 serves as a coordination point for phosphoenolpyruvate. The Proton acceptor role is filled by Asp-326. Positions 357 and 402 each coordinate phosphoenolpyruvate.

It belongs to the EPSP synthase family. In terms of assembly, monomer.

The protein localises to the cytoplasm. It carries out the reaction 3-phosphoshikimate + phosphoenolpyruvate = 5-O-(1-carboxyvinyl)-3-phosphoshikimate + phosphate. The protein operates within metabolic intermediate biosynthesis; chorismate biosynthesis; chorismate from D-erythrose 4-phosphate and phosphoenolpyruvate: step 6/7. Catalyzes the transfer of the enolpyruvyl moiety of phosphoenolpyruvate (PEP) to the 5-hydroxyl of shikimate-3-phosphate (S3P) to produce enolpyruvyl shikimate-3-phosphate and inorganic phosphate. In Brucella melitensis biotype 2 (strain ATCC 23457), this protein is 3-phosphoshikimate 1-carboxyvinyltransferase.